A 90-amino-acid polypeptide reads, in one-letter code: Probable Fe(2+)-trafficking protein (90 aa).

The protein belongs to the Fe(2+)-trafficking protein family.

Functionally, could be a mediator in iron transactions between iron acquisition and iron-requiring processes, such as synthesis and/or repair of Fe-S clusters in biosynthetic enzymes. This is Probable Fe(2+)-trafficking protein from Marinobacter nauticus (strain ATCC 700491 / DSM 11845 / VT8) (Marinobacter aquaeolei).